We begin with the raw amino-acid sequence, 185 residues long: Ribosome-recycling factor (185 aa).

This sequence belongs to the RRF family.

Its subcellular location is the cytoplasm. Functionally, responsible for the release of ribosomes from messenger RNA at the termination of protein biosynthesis. May increase the efficiency of translation by recycling ribosomes from one round of translation to another. This chain is Ribosome-recycling factor, found in Thermobifida fusca (strain YX).